A 247-amino-acid chain; its full sequence is UPF0259 membrane protein BUAP5A_271 (247 aa).

Helical transmembrane passes span 20–40, 85–105, 114–134, 137–157, 188–208, and 218–238; these read IGAI…IDMF, IMES…LISV, IVSS…LNFL, FIIQ…SIIL, IIGP…MLLA, and LFLI…IYLF.

The protein belongs to the UPF0259 family.

The protein resides in the cell membrane. This is UPF0259 membrane protein BUAP5A_271 from Buchnera aphidicola subsp. Acyrthosiphon pisum (strain 5A).